Here is a 751-residue protein sequence, read N- to C-terminus: Transposable element P transposase (751 aa).

Residues methionine 1–valine 77 form a THAP-type zinc finger.

Its function is as follows. P-element transposase that specifically mediates transposition of P-elements. Mediates both; precise and imprecise excision. This is Transposable element P transposase from Drosophila melanogaster (Fruit fly).